Consider the following 379-residue polypeptide: MAGSRSIFEEVQDSQKPAAMPGGVSRDRGRGRARVRVFIMILFVMVVVQIAIGGLTRLTDSGLSITEWAPITGAIPPLDEAAWEAELEAYRATTEYQEQNRGMSLAEFKVIYWWEWGHRQWARFLGVVWAVGFVGLLATKSVPVGWTGRLLLLGVLGGLQGVAGWWMVHSGLAPGMFDVASYRLAVHLGLAFLILGLMAWYILRLGRAEAELMTARRDGDRMLAGMATGLLHLTALQILIGALVAGIDAGRNYIDWPLMAGAFTPPDMWAIEPWYRNLFENDGTVQFFHRVTGYLLFVIGVAAWIMARRSARTATKRAFDWMAVMLFGQIVLGIMTVMHSSPWYLAIVHQFGAVVLITLILRARFLARYPLPQSVRGAA.

The segment at 1 to 28 (MAGSRSIFEEVQDSQKPAAMPGGVSRDR) is disordered. Transmembrane regions (helical) follow at residues 35–55 (VRVF…IGGL), 124–144 (FLGV…SVPV), 150–170 (LLLL…MVHS), 183–203 (RLAV…WYIL), 227–247 (ATGL…VAGI), 287–307 (FFHR…WIMA), 318–338 (AFDW…MTVM), and 341–361 (SPWY…TLIL). Residue His289 coordinates heme. His349 provides a ligand contact to heme.

It belongs to the COX15/CtaA family. Type 2 subfamily. In terms of assembly, interacts with CtaB. It depends on heme b as a cofactor.

It localises to the cell membrane. The enzyme catalyses Fe(II)-heme o + 2 A + H2O = Fe(II)-heme a + 2 AH2. The protein operates within porphyrin-containing compound metabolism; heme A biosynthesis; heme A from heme O: step 1/1. Functionally, catalyzes the conversion of heme O to heme A by two successive hydroxylations of the methyl group at C8. The first hydroxylation forms heme I, the second hydroxylation results in an unstable dihydroxymethyl group, which spontaneously dehydrates, resulting in the formyl group of heme A. The sequence is that of Heme A synthase from Jannaschia sp. (strain CCS1).